A 488-amino-acid chain; its full sequence is Glycogen synthase (488 aa).

Arg20 provides a ligand contact to ADP-alpha-D-glucose.

The protein belongs to the glycosyltransferase 1 family. Bacterial/plant glycogen synthase subfamily.

It carries out the reaction [(1-&gt;4)-alpha-D-glucosyl](n) + ADP-alpha-D-glucose = [(1-&gt;4)-alpha-D-glucosyl](n+1) + ADP + H(+). It functions in the pathway glycan biosynthesis; glycogen biosynthesis. Functionally, synthesizes alpha-1,4-glucan chains using ADP-glucose. The chain is Glycogen synthase from Chlorobaculum parvum (strain DSM 263 / NCIMB 8327) (Chlorobium vibrioforme subsp. thiosulfatophilum).